Here is a 480-residue protein sequence, read N- to C-terminus: NADH-quinone oxidoreductase subunit N (480 aa).

Helical transmembrane passes span 11–31 (VIPE…DLFV), 38–58 (ITYG…IALA), 74–94 (GLSD…FLYS), 109–129 (YVLG…YSFL), 163–183 (FILG…LYGI), 200–220 (GAGL…GLAF), 239–259 (PTSV…AIIM), 273–293 (WQGM…VVAI), 301–321 (MLAY…LAGT), 329–349 (LFYT…IILL), 372–392 (FAFI…TVGF), 405–425 (VEMI…AFYY), and 451–471 (VVLS…GLLM).

This sequence belongs to the complex I subunit 2 family. In terms of assembly, NDH-1 is composed of 14 different subunits. Subunits NuoA, H, J, K, L, M, N constitute the membrane sector of the complex.

It is found in the cell inner membrane. The catalysed reaction is a quinone + NADH + 5 H(+)(in) = a quinol + NAD(+) + 4 H(+)(out). Its function is as follows. NDH-1 shuttles electrons from NADH, via FMN and iron-sulfur (Fe-S) centers, to quinones in the respiratory chain. The immediate electron acceptor for the enzyme in this species is believed to be ubiquinone. Couples the redox reaction to proton translocation (for every two electrons transferred, four hydrogen ions are translocated across the cytoplasmic membrane), and thus conserves the redox energy in a proton gradient. In Thioalkalivibrio sulfidiphilus (strain HL-EbGR7), this protein is NADH-quinone oxidoreductase subunit N.